A 607-amino-acid polypeptide reads, in one-letter code: Protein NRT1/ PTR FAMILY 1.2 (607 aa).

10 helical membrane passes run Thr-65–Leu-85, Ile-96–Leu-116, Ala-138–Ile-158, Phe-185–Val-205, Ile-215–Ser-235, Val-374–Tyr-394, Met-418–Phe-438, Ala-460–Gly-480, Ile-496–Leu-516, and Tyr-544–Trp-564. Residue Ser-601 is modified to Phosphoserine.

Belongs to the major facilitator superfamily. Proton-dependent oligopeptide transporter (POT/PTR) (TC 2.A.17) family. In terms of tissue distribution, expressed in shoots, stems, leaves, flowers and siliques. Mainly detected in larger expanded leaves, in the companion cells of major veins.

It localises to the cell membrane. In terms of biological role, low-affinity nitrate transporter involved in xylem-to-phloem transfer for redistributing nitrate into developing leaves. Not involved in dipeptides transport. In Arabidopsis thaliana (Mouse-ear cress), this protein is Protein NRT1/ PTR FAMILY 1.2 (NPF1.2).